We begin with the raw amino-acid sequence, 136 residues long: Transcription antitermination protein NusB (136 aa).

The protein belongs to the NusB family.

Functionally, involved in transcription antitermination. Required for transcription of ribosomal RNA (rRNA) genes. Binds specifically to the boxA antiterminator sequence of the ribosomal RNA (rrn) operons. This Salinispora arenicola (strain CNS-205) protein is Transcription antitermination protein NusB.